The primary structure comprises 832 residues: Subtilisin-like protease SBT2.1 (832 aa).

The signal sequence occupies residues 1–24 (MDESSLVRFVFLLCLVSSSVFCLA). A propeptide spans 25-138 (ESDQNATVSS…VVLDFLVEKA (114 aa)) (activation peptide). Asn-29 and Asn-73 each carry an N-linked (GlcNAc...) asparagine glycan. The 101-residue stretch at 36-136 (VYIVTLKDRP…ENVVLDFLVE (101 aa)) folds into the Inhibitor I9 domain. One can recognise a Peptidase S8 domain in the interval 145–684 (FLGLPRGAWL…SGFVNATAAL (540 aa)). Catalysis depends on Asp-172, which acts as the Charge relay system. Asn-233 is a glycosylation site (N-linked (GlcNAc...) asparagine). Catalysis depends on His-247, which acts as the Charge relay system. Asn-272, Asn-315, Asn-390, Asn-417, Asn-470, Asn-515, and Asn-522 each carry an N-linked (GlcNAc...) asparagine glycan. One can recognise a PA domain in the interval 408–503 (LVLATHALRN…MDIPGILISS (96 aa)). The Charge relay system role is filled by Ser-609. Residues Asn-679, Asn-705, Asn-713, Asn-723, Asn-760, and Asn-801 are each glycosylated (N-linked (GlcNAc...) asparagine).

It belongs to the peptidase S8 family.

It is found in the secreted. This is Subtilisin-like protease SBT2.1 from Arabidopsis thaliana (Mouse-ear cress).